The primary structure comprises 231 residues: Protein FMP52, mitochondrial (231 aa).

A mitochondrion-targeting transit peptide spans Met1–Lys44.

Belongs to the FMP52 family.

The protein resides in the mitochondrion outer membrane. In Saccharomyces cerevisiae (strain ATCC 204508 / S288c) (Baker's yeast), this protein is Protein FMP52, mitochondrial (FMP52).